A 480-amino-acid chain; its full sequence is MSEKETNYVENLLTQLENELNEDNLPEDINTLLRKCSLNLVTVVSLPDMDVKPLLATIKRFLTSNVSYDSLNYDYLLDVVDKLVPMADFDDVLEVYSAEDLVKALRSEIDPLKVAACRVIENSQPKGLFATSNIIDILLDILFDEKVENDKLITAIEKALERLSTDELIRRRLFDNNLPYLVSVKGRMETVSFVRLIDFLTIEFQFISGPEFKDIIFCFTKEEILKSVEDILVFIELVNYYTKFLLEIRNQDKYWALRHVKKILPVFAQLFEDTENYPDVRAFSTNCLLQLFAEVSRIEEDEYSLFKTMDKDSLKIGSEAKLITEWLELINPQYLVKYHKDVVENYFHVSGYSIGMLRNLSADEECFNAIRNKFSAEIVLRLPYLEQMQVVETLTRYEYTSKFLLNEMPKVMGSLIGDGSAGAIIDLETVHYRNSALRNLLDKGEEKLSVWYEPLLREYSKAVNGKNYSTGSETKIADCR.

Belongs to the proteasome subunit S5B/HSM3 family. In terms of assembly, interacts with RPT1, RPT2, RPT3, RPT5, RPT6, RPN1 and RPN2. Part of transient complex (BP1) containing HSM3, RPT1, RPT2 and RPT5 formed during the assembly of the 26S proteasome.

Its subcellular location is the cytoplasm. Involved in DNA mismatch repair in slow-growing cells. Acts as a chaperone during the assembly of the 26S proteasome, specifically of the base subcomplex of the 19S regulatory complex (RC). This is DNA mismatch repair protein HSM3 (HSM3) from Saccharomyces cerevisiae (strain ATCC 204508 / S288c) (Baker's yeast).